We begin with the raw amino-acid sequence, 638 residues long: Growth hormone receptor (638 aa).

Positions Met-1–Ala-18 are cleaved as a signal peptide. The Extracellular portion of the chain corresponds to Phe-19 to Arg-264. Positions Gly-30–Pro-51 are disordered. N-linked (GlcNAc...) asparagine glycosylation occurs at Asn-46. 2 disulfide bridges follow: Cys-56/Cys-66 and Cys-101/Cys-112. N-linked (GlcNAc...) asparagine glycosylation occurs at Asn-115. Residues Cys-126 and Cys-140 are joined by a disulfide bond. The 104-residue stretch at Pro-151–Met-254 folds into the Fibronectin type-III domain. N-linked (GlcNAc...) asparagine glycans are attached at residues Asn-156, Asn-161, and Asn-200. The short motif at Tyr-240–Ser-244 is the WSXWS motif element. The tract at residues Glu-260–Asp-262 is required for ADAM17-mediated proteolysis. The helical transmembrane segment at Phe-265 to Ser-288 threads the bilayer. Topologically, residues Lys-289 to Pro-638 are cytoplasmic. Residues Lys-294–Ala-379 are required for JAK2 binding. Positions Ile-297–Lys-305 match the Box 1 motif motif. The UbE motif motif lies at Asp-340–Asp-349. Ser-341 is subject to Phosphoserine. Tyr-487 is subject to Phosphotyrosine. The disordered stretch occupies residues Thr-573–Val-592. Tyr-595 carries the phosphotyrosine modification.

Belongs to the type I cytokine receptor family. Type 1 subfamily. In terms of assembly, on growth hormone (GH) binding, forms homodimers and binds JAK2 via a box 1-containing domain. The soluble form (GHBP) is produced by phorbol ester-promoted proteolytic cleavage at the cell surface (shedding) by ADAM17/TACE. Shedding is inhibited by growth hormone (GH) binding to the receptor probably due to a conformational change in GHR rendering the receptor inaccessible to ADAM17. Post-translationally, on GH binding, phosphorylated on tyrosine residues in the cytoplasmic domain by JAK2. In terms of processing, ubiquitinated by the ECS(SOCS2) complex following ligand-binding and phosphorylation by JAK2, leading to its degradation by the proteasome. Regulation by the ECS(SOCS2) complex acts as a negative feedback loop of growth hormone receptor signaling. Ubiquitination is not sufficient for GHR internalization.

The protein localises to the cell membrane. It localises to the secreted. Receptor for pituitary gland growth hormone involved in regulating postnatal body growth. On ligand binding, couples to, and activates the JAK2/STAT5 pathway. Its function is as follows. The soluble form acts as a reservoir of growth hormone in plasma and may be a modulator/inhibitor of GH signaling. This chain is Growth hormone receptor, found in Oryctolagus cuniculus (Rabbit).